Here is a 194-residue protein sequence, read N- to C-terminus: Methyl-CpG-binding domain protein 3-like 1 (194 aa).

Residues 1-104 (MAKSSQRKQR…KLVPSYTGGS (104 aa)) form a transcription repressor region.

It belongs to the MBD3L family. Highly expressed in testis. Detected at low levels in pancreas. Not detected in the other tissues tested.

The protein resides in the nucleus. Functionally, transcriptional repressor. The sequence is that of Methyl-CpG-binding domain protein 3-like 1 (MBD3L1) from Homo sapiens (Human).